An 864-amino-acid chain; its full sequence is Leucine--tRNA ligase (864 aa).

The 'HIGH' region motif lies at 42–52; it reads PYPSGKLHMGH. A 'KMSKS' region motif is present at residues 624–628; it reads KMSKS. ATP is bound at residue Lys627.

The protein belongs to the class-I aminoacyl-tRNA synthetase family.

The protein localises to the cytoplasm. It carries out the reaction tRNA(Leu) + L-leucine + ATP = L-leucyl-tRNA(Leu) + AMP + diphosphate. The polypeptide is Leucine--tRNA ligase (Burkholderia vietnamiensis (strain G4 / LMG 22486) (Burkholderia cepacia (strain R1808))).